The chain runs to 213 residues: Protein GrpE (213 aa).

A disordered region spans residues 1 to 61 (MEQGEKQVME…AEKAPTAEEL (61 aa)). The span at 13–35 (TYDEPEREQPIEEEAAPQPEEES) shows a compositional bias: acidic residues.

This sequence belongs to the GrpE family. In terms of assembly, homodimer.

The protein resides in the cytoplasm. Its function is as follows. Participates actively in the response to hyperosmotic and heat shock by preventing the aggregation of stress-denatured proteins, in association with DnaK and GrpE. It is the nucleotide exchange factor for DnaK and may function as a thermosensor. Unfolded proteins bind initially to DnaJ; upon interaction with the DnaJ-bound protein, DnaK hydrolyzes its bound ATP, resulting in the formation of a stable complex. GrpE releases ADP from DnaK; ATP binding to DnaK triggers the release of the substrate protein, thus completing the reaction cycle. Several rounds of ATP-dependent interactions between DnaJ, DnaK and GrpE are required for fully efficient folding. This Geobacillus kaustophilus (strain HTA426) protein is Protein GrpE.